The primary structure comprises 643 residues: DNA polymerase III subunit tau (643 aa).

45–52 (GTRGVGKT) contacts ATP. Positions 64, 73, 76, and 79 each coordinate Zn(2+). Positions 385–404 (TPTQVPPQPQSAPQQAPTVP) are disordered.

Belongs to the DnaX/STICHEL family. As to quaternary structure, the DNA polymerase III holoenzyme complex contains at least 10 different subunits organized into 3 functionally essential subassemblies: the Pol III core, the beta sliding clamp processivity factor and the clamp-loading complex. The Pol III core (subunits alpha, epsilon and theta) contains the polymerase and the 3'-5' exonuclease proofreading activities. The polymerase is tethered to the template via the dimeric beta sliding clamp processivity factor. The clamp-loading complex (also called gamma complex) assembles the beta sliding clamp onto the primed template and plays a central role in the organization and communication at the replication fork. The clamp-loading complex contains delta, delta', psi and chi, and 3 copies of either or both of two different DnaX proteins, gamma and tau. The DNA replisome complex has a single clamp loader (3 tau and 1 each of delta, delta', psi and chi subunits) which binds 3 Pol III cores (1 core on the leading strand and 2 on the lagging strand) each with a beta sliding clamp dimer. Additional proteins in the replisome are other copies of gamma, psi and chi, Ssb, DNA helicase and RNA primase. The clamp loader hydrolyzes ATP to assemble the beta processivity factor onto the primed template and plays a central role in the organization and communication at the replication fork; the minimal complex to load the beta sliding clamp on DNA is delta, delta', gamma.

It carries out the reaction DNA(n) + a 2'-deoxyribonucleoside 5'-triphosphate = DNA(n+1) + diphosphate. Part of the beta sliding clamp loading complex, which hydrolyzes ATP to load the beta clamp onto primed DNA to form the DNA replication pre-initiation complex. DNA polymerase III is a complex, multichain enzyme responsible for most of the replicative synthesis in bacteria. This DNA polymerase also exhibits 3'-5' exonuclease activity. The gamma complex (gamma(3),delta,delta') is thought to load beta dimers onto DNA by binding ATP which alters the complex's conformation so it can bind beta sliding clamp dimers and open them at one interface. Primed DNA is recognized, ATP is hydrolyzed releasing the gamma complex and closing the beta sliding clamp ring around the primed DNA. Its function is as follows. Serves as a scaffold to trimerize the core complex. In terms of biological role, interacts with the delta and delta' subunits to transfer the beta subunit on the DNA. Interacts with ATP, drives ATP-induced conformational changes in the gamma complex that opens the beta sliding clamp ring. After loading of primed DNA ATP is hydrolyzed and the beta sliding clamp ring closes. This is DNA polymerase III subunit tau (dnaX) from Escherichia coli (strain K12).